The chain runs to 432 residues: 3-phosphoshikimate 1-carboxyvinyltransferase (432 aa).

Positions 22, 23, and 27 each coordinate 3-phosphoshikimate. Lys-22 is a binding site for phosphoenolpyruvate. 2 residues coordinate phosphoenolpyruvate: Gly-96 and Arg-127. 3-phosphoshikimate is bound by residues Ser-173, Ser-174, Gln-175, Ser-201, Asp-316, Asn-339, and Lys-343. Phosphoenolpyruvate is bound at residue Gln-175. Asp-316 acts as the Proton acceptor in catalysis. Phosphoenolpyruvate-binding residues include Arg-347, Arg-391, and Lys-416.

It belongs to the EPSP synthase family. Monomer.

Its subcellular location is the cytoplasm. It catalyses the reaction 3-phosphoshikimate + phosphoenolpyruvate = 5-O-(1-carboxyvinyl)-3-phosphoshikimate + phosphate. The protein operates within metabolic intermediate biosynthesis; chorismate biosynthesis; chorismate from D-erythrose 4-phosphate and phosphoenolpyruvate: step 6/7. Its function is as follows. Catalyzes the transfer of the enolpyruvyl moiety of phosphoenolpyruvate (PEP) to the 5-hydroxyl of shikimate-3-phosphate (S3P) to produce enolpyruvyl shikimate-3-phosphate and inorganic phosphate. This is 3-phosphoshikimate 1-carboxyvinyltransferase from Histophilus somni (strain 2336) (Haemophilus somnus).